A 108-amino-acid polypeptide reads, in one-letter code: Protein S100-A15A (108 aa).

The region spanning 53 to 88 (KEPYYVTELFQATDKNRDNQICFDEFLYILGKLVKD) is the EF-hand domain. Ca(2+) contacts are provided by Asp-66, Asn-68, Asp-70, Gln-72, and Glu-77.

This sequence belongs to the S-100 family.

The polypeptide is Protein S100-A15A (S100A15A) (Gorilla gorilla gorilla (Western lowland gorilla)).